Consider the following 697-residue polypeptide: Elongation factor G 2 (697 aa).

Residues 6-281 (TNYRNFGIFA…AVVDFLPNPT (276 aa)) enclose the tr-type G domain. GTP-binding positions include 15–22 (AHVDAGKT), 79–83 (DTPGH), and 133–136 (NKLD).

This sequence belongs to the TRAFAC class translation factor GTPase superfamily. Classic translation factor GTPase family. EF-G/EF-2 subfamily.

Its subcellular location is the cytoplasm. Functionally, catalyzes the GTP-dependent ribosomal translocation step during translation elongation. During this step, the ribosome changes from the pre-translocational (PRE) to the post-translocational (POST) state as the newly formed A-site-bound peptidyl-tRNA and P-site-bound deacylated tRNA move to the P and E sites, respectively. Catalyzes the coordinated movement of the two tRNA molecules, the mRNA and conformational changes in the ribosome. This chain is Elongation factor G 2, found in Trichodesmium erythraeum (strain IMS101).